Here is a 269-residue protein sequence, read N- to C-terminus: Putative pyruvate, phosphate dikinase regulatory protein (269 aa).

ADP is bound at residue 151-158; sequence GVSRSSKT.

This sequence belongs to the pyruvate, phosphate/water dikinase regulatory protein family. PDRP subfamily.

It catalyses the reaction N(tele)-phospho-L-histidyl/L-threonyl-[pyruvate, phosphate dikinase] + ADP = N(tele)-phospho-L-histidyl/O-phospho-L-threonyl-[pyruvate, phosphate dikinase] + AMP + H(+). The enzyme catalyses N(tele)-phospho-L-histidyl/O-phospho-L-threonyl-[pyruvate, phosphate dikinase] + phosphate + H(+) = N(tele)-phospho-L-histidyl/L-threonyl-[pyruvate, phosphate dikinase] + diphosphate. Its function is as follows. Bifunctional serine/threonine kinase and phosphorylase involved in the regulation of the pyruvate, phosphate dikinase (PPDK) by catalyzing its phosphorylation/dephosphorylation. The chain is Putative pyruvate, phosphate dikinase regulatory protein from Geobacter metallireducens (strain ATCC 53774 / DSM 7210 / GS-15).